The chain runs to 100 residues: Apolipoprotein C-II (100 aa).

The signal sequence occupies residues 1 to 22 (MDSRFLLALFLVLLVLGCEVQA). The interval 66-74 (SVDEKLRDM) is lipid binding. The tract at residues 78–100 (SSAAMTTYAIIFTDQILTLLKGE) is lipoprotein lipase cofactor.

It belongs to the apolipoprotein C2 family. In terms of processing, proapolipoprotein C-II is synthesized as a sialic acid containing glycoprotein which is subsequently desialylated prior to its proteolytic processing. Proapolipoprotein C-II, the major form found in plasma undergoes proteolytic cleavage of its N-terminal hexapeptide to generate the mature form apolipoprotein C-II, which occurs as the minor form in plasma.

It localises to the secreted. Component of chylomicrons, very low-density lipoproteins (VLDL), low-density lipoproteins (LDL), and high-density lipoproteins (HDL) in plasma. Plays an important role in lipoprotein metabolism as an activator of lipoprotein lipase. This chain is Apolipoprotein C-II (APOC2), found in Myodes glareolus (Bank vole).